Reading from the N-terminus, the 107-residue chain is Iron-binding protein IscA (107 aa).

Residues cysteine 35, cysteine 99, and cysteine 101 each contribute to the Fe cation site.

It belongs to the HesB/IscA family. Homodimer; may form tetramers and higher multimers. Requires Fe cation as cofactor.

Functionally, is able to transfer iron-sulfur clusters to apo-ferredoxin. Multiple cycles of [2Fe2S] cluster formation and transfer are observed, suggesting that IscA acts catalytically. Recruits intracellular free iron so as to provide iron for the assembly of transient iron-sulfur cluster in IscU in the presence of IscS, L-cysteine and the thioredoxin reductase system TrxA/TrxB. The sequence is that of Iron-binding protein IscA from Pectobacterium atrosepticum (strain SCRI 1043 / ATCC BAA-672) (Erwinia carotovora subsp. atroseptica).